Reading from the N-terminus, the 330-residue chain is Erlin-2-B (330 aa).

The Cytoplasmic segment spans residues 1-2 (MS). A helical transmembrane segment spans residues 3–23 (HAGAIAALGVALIAAALFSAI). At 24 to 330 (HKIEEGHVGV…NEPAAAEELK (307 aa)) the chain is on the lumenal side. Asn-106 is a glycosylation site (N-linked (GlcNAc...) asparagine). Residues 308–330 (SSSAGPRVQSAKRNEPAAAEELK) are disordered. A compositionally biased stretch (basic and acidic residues) spans 319 to 330 (KRNEPAAAEELK).

This sequence belongs to the band 7/mec-2 family.

The protein resides in the endoplasmic reticulum membrane. Mediates the endoplasmic reticulum-associated degradation (ERAD) of inositol 1,4,5-trisphosphate receptors (IP3Rs). Promotes sterol-accelerated ERAD of HMGCR. Involved in regulation of cellular cholesterol homeostasis by regulation the SREBP signaling pathway. This is Erlin-2-B (erlin2-b) from Xenopus laevis (African clawed frog).